We begin with the raw amino-acid sequence, 325 residues long: MIDEVEEIAVKSAYEPGPYGYRPQERPIFLYLDHGLIILDKPKGPSSHEVTERVKRILEYPGKVGHCGTLDPKVSGVLPIVLGNATKLSKFISGYDKEYVGTLYLHGDVPIDELKGALDKFTGPIFQRPPVKSAVKRSLRVRRVYSIELLSSEGRFHKLRVRVESGTYIRKLFFDIGEFLGVGGSMRDLRRIRSGIFTEKDCVTLEDIKDAYDSWRESGDESKIRKVILPLEEAVRHLPKIYVKDSAVASLTHGASLKVKGICSLSRGIKKGSIVALMTLKGELIAIGRALMDFDEMLSADSGVAASIERVIMPRDLYPPMWKTG.

Catalysis depends on aspartate 71, which acts as the Nucleophile. The PUA domain occupies 238–313 (LPKIYVKDSA…VAASIERVIM (76 aa)).

The protein belongs to the pseudouridine synthase TruB family. Type 2 subfamily.

It carries out the reaction uridine(55) in tRNA = pseudouridine(55) in tRNA. Functionally, could be responsible for synthesis of pseudouridine from uracil-55 in the psi GC loop of transfer RNAs. The chain is Probable tRNA pseudouridine synthase B from Korarchaeum cryptofilum (strain OPF8).